The primary structure comprises 475 residues: ATP synthase subunit beta (475 aa).

152 to 159 (GGAGVGKT) contacts ATP.

It belongs to the ATPase alpha/beta chains family. In terms of assembly, F-type ATPases have 2 components, CF(1) - the catalytic core - and CF(0) - the membrane proton channel. CF(1) has five subunits: alpha(3), beta(3), gamma(1), delta(1), epsilon(1). CF(0) has four main subunits: a(1), b(1), b'(1) and c(9-12).

Its subcellular location is the cell inner membrane. It carries out the reaction ATP + H2O + 4 H(+)(in) = ADP + phosphate + 5 H(+)(out). Functionally, produces ATP from ADP in the presence of a proton gradient across the membrane. The catalytic sites are hosted primarily by the beta subunits. The protein is ATP synthase subunit beta of Cereibacter sphaeroides (strain ATCC 17025 / ATH 2.4.3) (Rhodobacter sphaeroides).